The chain runs to 129 residues: Small ribosomal subunit protein uS11 (129 aa).

Belongs to the universal ribosomal protein uS11 family. Part of the 30S ribosomal subunit. Interacts with proteins S7 and S18. Binds to IF-3.

In terms of biological role, located on the platform of the 30S subunit, it bridges several disparate RNA helices of the 16S rRNA. Forms part of the Shine-Dalgarno cleft in the 70S ribosome. The chain is Small ribosomal subunit protein uS11 from Enterobacter sp. (strain 638).